A 293-amino-acid chain; its full sequence is MALKAEDSFDIYSQLIQSFCRYAENTTVSESQSPAFNAQKEFQTCQDHACCTHSEAHTHILMQQWQLLEEQWEYIDHLKTDVAALKQLLHGFMNSLSGTDSGMEGTNHFLPPHQNPTLLKDEEIVASALNRPSVDINGFEENITTGAQIHAAFTKSPKKMPATSTPRKSEVLWSCSPTLATDGYFMLPDIILNPLDGKKLVSMLRSSNYEPHRFAELLFQHHVPHSLFQLWANKVNFDGSRGKLGLPRNLMIDILHQTSKRFVLGPKEKRKIKTRLNLLLRTRQDRAWWDVGL.

A BEN domain is found at 187 to 287 (LPDIILNPLD…LLLRTRQDRA (101 aa)).

Interacts with poc1b. In terms of tissue distribution, an mRNA and protein component of germ plasm and primordial germ cells (PGCs) throughout oogenesis and early development, being first localized to the granulo-fibrillar material (GFM) of the mitochondrial cloud in stage I and II oocytes and to the periphery of mature germinal granules both in oocytes and in embryos. Shows some somatic expression including the ectodermal cells of tailbud embryos. In adults, only expressed in ovaries.

The protein localises to the cytoplasm. It is found in the nucleus. Probably plays a role in germ plasm formation, positioning and maintenance. The chain is Protein Pat from Xenopus laevis (African clawed frog).